The following is a 381-amino-acid chain: Homoserine O-succinyltransferase (381 aa).

The AB hydrolase-1 domain occupies 45–360 (NAVLVCHALN…PHGHDAFLLD (316 aa)). Catalysis depends on Ser-151, which acts as the Nucleophile. Residue Arg-221 participates in substrate binding. Residues Asp-321 and His-354 contribute to the active site. Residue Asp-355 participates in substrate binding.

It belongs to the AB hydrolase superfamily. MetX family. Homodimer.

The protein localises to the cytoplasm. The enzyme catalyses L-homoserine + succinyl-CoA = O-succinyl-L-homoserine + CoA. Its pathway is amino-acid biosynthesis; L-methionine biosynthesis via de novo pathway; O-succinyl-L-homoserine from L-homoserine: step 1/1. Functionally, transfers a succinyl group from succinyl-CoA to L-homoserine, forming succinyl-L-homoserine. The polypeptide is Homoserine O-succinyltransferase (Burkholderia thailandensis (strain ATCC 700388 / DSM 13276 / CCUG 48851 / CIP 106301 / E264)).